We begin with the raw amino-acid sequence, 840 residues long: Protein translocase subunit SecA (840 aa).

ATP contacts are provided by residues Gln-85, 103 to 107 (GEGKT), and Asp-492. Positions 787 to 821 (QRERVAKETGASHGGDSQEIKKKPVKKEPKVGRND) are disordered. The segment covering 802–819 (DSQEIKKKPVKKEPKVGR) has biased composition (basic and acidic residues). 4 residues coordinate Zn(2+): Cys-823, Cys-825, Cys-834, and Cys-835.

The protein belongs to the SecA family. In terms of assembly, monomer and homodimer. Part of the essential Sec protein translocation apparatus which comprises SecA, SecYEG and auxiliary proteins SecDF. Other proteins may also be involved. Zn(2+) is required as a cofactor.

It is found in the cell membrane. It localises to the cytoplasm. It carries out the reaction ATP + H2O + cellular proteinSide 1 = ADP + phosphate + cellular proteinSide 2.. Functionally, part of the Sec protein translocase complex. Interacts with the SecYEG preprotein conducting channel. Has a central role in coupling the hydrolysis of ATP to the transfer of proteins into and across the cell membrane, serving as an ATP-driven molecular motor driving the stepwise translocation of polypeptide chains across the membrane. The polypeptide is Protein translocase subunit SecA (Clostridium perfringens (strain SM101 / Type A)).